Here is a 200-residue protein sequence, read N- to C-terminus: MSAAPTDAKSVKLVVVGDGAVGKTCLLICYTTNEFPKDYVPTVFDNYMAPMTVDGEPINLGLWDTAGQEDYEQLRPLSYPNTDLFLLCFSVISRTSFNNISSKWLPEIKHYEPKCKMMVVGTKTDCRNDEAMIRKLADENQKPITTEEGEKLAKDIKAICYMECSALTRSGLNQVFDEAIHIVLNKNQSSKKSSKKCALL.

The GTP site is built by alanine 20, glycine 22, lysine 23, threonine 24, cysteine 25, tyrosine 39, and threonine 42. Threonine 24 is a Mg(2+) binding site. 2 short sequence motifs (switch) span residues 33-44 (NEFPKDYVPTVF) and 64-82 (DTAGQEDYEQLRPLSYPNT). Threonine 42 lines the Mg(2+) pocket. Residues lysine 123, aspartate 125, and alanine 166 each contribute to the GTP site. Cysteine 197 is subject to Cysteine methyl ester. A lipid anchor (S-geranylgeranyl cysteine) is attached at cysteine 197. Residues 198-200 (ALL) constitute a propeptide, removed in mature form.

Belongs to the small GTPase superfamily. Rho family. It depends on Mg(2+) as a cofactor.

The protein resides in the cell membrane. It is found in the cytoplasm. Its subcellular location is the cytoskeleton. It carries out the reaction GTP + H2O = GDP + phosphate + H(+). With respect to regulation, regulated by guanine nucleotide exchange factors (GEFs) which promote the exchange of bound GDP for free GTP, GTPase activating proteins (GAPs) which increase the GTP hydrolysis activity, and GDP dissociation inhibitors which inhibit the dissociation of the nucleotide from the GTPase. Small GTPase which cycles between active GTP-bound and inactive GDP-bound states. This is Rho-related protein racD from Entamoeba histolytica (strain ATCC 30459 / HM-1:IMSS / ABRM).